The chain runs to 389 residues: 1-deoxy-D-xylulose 5-phosphate reductoisomerase (389 aa).

Serine 11, glycine 12, serine 13, valine 14, asparagine 39, and asparagine 122 together coordinate NADPH. 1-deoxy-D-xylulose 5-phosphate is bound at residue lysine 123. Glutamate 124 provides a ligand contact to NADPH. A Mn(2+)-binding site is contributed by aspartate 148. 1-deoxy-D-xylulose 5-phosphate is bound by residues serine 149, glutamate 150, serine 174, and histidine 197. Glutamate 150 provides a ligand contact to Mn(2+). Glycine 203 provides a ligand contact to NADPH. The 1-deoxy-D-xylulose 5-phosphate site is built by serine 210, asparagine 215, lysine 216, and glutamate 219. Residue glutamate 219 coordinates Mn(2+).

Belongs to the DXR family. Mg(2+) serves as cofactor. Mn(2+) is required as a cofactor.

The catalysed reaction is 2-C-methyl-D-erythritol 4-phosphate + NADP(+) = 1-deoxy-D-xylulose 5-phosphate + NADPH + H(+). It participates in isoprenoid biosynthesis; isopentenyl diphosphate biosynthesis via DXP pathway; isopentenyl diphosphate from 1-deoxy-D-xylulose 5-phosphate: step 1/6. In terms of biological role, catalyzes the NADPH-dependent rearrangement and reduction of 1-deoxy-D-xylulose-5-phosphate (DXP) to 2-C-methyl-D-erythritol 4-phosphate (MEP). In Leptospira interrogans serogroup Icterohaemorrhagiae serovar copenhageni (strain Fiocruz L1-130), this protein is 1-deoxy-D-xylulose 5-phosphate reductoisomerase.